A 763-amino-acid polypeptide reads, in one-letter code: Phosphoglycerol transferase I (763 aa).

4 consecutive transmembrane segments (helical) span residues methionine 1 to alanine 21, tryptophan 26 to tyrosine 46, isoleucine 77 to valine 97, and valine 108 to phenylalanine 128.

This sequence belongs to the OpgB family.

It localises to the cell inner membrane. It catalyses the reaction a phosphatidylglycerol + a membrane-derived-oligosaccharide D-glucose = a 1,2-diacyl-sn-glycerol + a membrane-derived-oligosaccharide 6-(glycerophospho)-D-glucose.. The protein operates within glycan metabolism; osmoregulated periplasmic glucan (OPG) biosynthesis. Functionally, transfers a phosphoglycerol residue from phosphatidylglycerol to the membrane-bound nascent glucan backbones. In Salmonella dublin (strain CT_02021853), this protein is Phosphoglycerol transferase I.